Here is a 566-residue protein sequence, read N- to C-terminus: FAD-dependent monooxygenase asqG (566 aa).

The N-terminal stretch at 1–19 (MAAFTVIIIGGSISGLTLA) is a signal peptide. Positions 33, 47, 113, 313, and 326 each coordinate FAD. Transmembrane regions (helical) follow at residues 448-468 (ASST…GAVW) and 482-502 (GYTL…ASAV).

Belongs to the paxM FAD-dependent monooxygenase family. FAD serves as cofactor.

The protein localises to the membrane. It catalyses the reaction [(1'E)-3'-hydroxy-3',7'-dimethylocta-1',6'-dien-1'-yl]-quinolinone B + NADPH + O2 + H(+) = [(1'E)-5'-(3',3'-dimethyloxiran-2'-yl)-3'-hydroxy-3'-methylpent-1'-en-1'-yl]-quinolinone B + NADP(+) + H2O. Its pathway is secondary metabolite biosynthesis. The protein operates within alkaloid biosynthesis. It participates in mycotoxin biosynthesis. Its function is as follows. FAD-dependent monooxygenase; part of the gene cluster that mediates the biosynthesis of the aspoquinolone mycotoxins. Within the pathway, the FAD-dependent monooxygenase asqG catalyzes the epoxidation of the terminal C7'-C8' olefin to produce the intermediate [(1'E)-5'-(3',3'-dimethyloxiran-2'-yl)-3'-hydroxy-3'-methylpent-1'-en-1'-yl]-quinolinone B. The first step of the pathway is catalyzed by the nonribosomal peptide synthetase asqK that condenses anthranilic acid and O-methyl-L-tyrosine to produce 4'-methoxycyclopeptin. 4'-methoxycyclopeptin is then converted to 4'-methoxydehydrocyclopeptin by the ketoglutarate-dependent dioxygenase asqJ. AsqJ also converts its first product 4'-methoxydehydrocyclopeptin to 4'-methoxycyclopenin. The following conversion of 4'-methoxycyclopenin into 4'-methoxyviridicatin is catalyzed by the cyclopenase asqI. 4'-methoxyviridicatin is the precursor of quinolone natural products, and is further converted to quinolinone B. The prenyltransferase asqH1 then catalyzes the canonical Friedel-Crafts alkylation of quinolinone B with dimethylallyl cation to yield dimethylallyl quinolone, which is subjected to FAD-dependent dehydrogenation by the FAD-linked oxidoreductase asqF to yield conjugated aryl diene. The delta(3') double bond then serves as the site of the second alkylation with DMAPP catalyzed by the prenyltransferase asqH2 to yield a carbenium ion intermediate, which can be attacked by H(2)O to yield a styrenyl quinolone containing a C3'-hydroxyprenyl chain. The FAD-dependent monooxygenase asqG performs epoxidation of the terminal C7'-C8' olefin. Finally, after dehydratation of the epoxide at C3 by asqC, the quinolone epoxide rearrangement protein asqO catalyzes an enzymatic 3-exo-tet cyclization to yield the cyclopropyl-THF ring system in aspoquinolone. This Emericella nidulans (strain FGSC A4 / ATCC 38163 / CBS 112.46 / NRRL 194 / M139) (Aspergillus nidulans) protein is FAD-dependent monooxygenase asqG.